Reading from the N-terminus, the 335-residue chain is Malate dehydrogenase (335 aa).

G11 to G17 is a binding site for NAD(+). Substrate-binding residues include R94 and R100. Residues N107, Q114, and V131–N133 contribute to the NAD(+) site. Residues N133 and R167 each contribute to the substrate site. The Proton acceptor role is filled by H192.

It belongs to the LDH/MDH superfamily. MDH type 2 family.

The catalysed reaction is (S)-malate + NAD(+) = oxaloacetate + NADH + H(+). Catalyzes the reversible oxidation of malate to oxaloacetate. The protein is Malate dehydrogenase of Bdellovibrio bacteriovorus (strain ATCC 15356 / DSM 50701 / NCIMB 9529 / HD100).